Here is a 465-residue protein sequence, read N- to C-terminus: 23S rRNA (uracil(1939)-C(5))-methyltransferase RlmD (465 aa).

Residues 1-20 (MSEAVPLSTPGASHAGAATD) are disordered. Positions 12-80 (ASHAGAATDR…PTYEQAQVVD (69 aa)) constitute a TRAM domain. 4 residues coordinate [4Fe-4S] cluster: C93, C99, C102, and C181. S-adenosyl-L-methionine-binding residues include Q289, F318, N323, E339, N367, and D388. C421 (nucleophile) is an active-site residue.

It belongs to the class I-like SAM-binding methyltransferase superfamily. RNA M5U methyltransferase family. RlmD subfamily.

The catalysed reaction is uridine(1939) in 23S rRNA + S-adenosyl-L-methionine = 5-methyluridine(1939) in 23S rRNA + S-adenosyl-L-homocysteine + H(+). In terms of biological role, catalyzes the formation of 5-methyl-uridine at position 1939 (m5U1939) in 23S rRNA. The chain is 23S rRNA (uracil(1939)-C(5))-methyltransferase RlmD from Burkholderia thailandensis (strain ATCC 700388 / DSM 13276 / CCUG 48851 / CIP 106301 / E264).